We begin with the raw amino-acid sequence, 389 residues long: Cuticlin-3 (389 aa).

The N-terminal stretch at 1–19 (MARYSLGLGLCLLVASVSA) is a signal peptide. Residues 20–354 (IPVDNNVEGE…ELCISSFHIS (335 aa)) are Extracellular-facing. The 246-residue stretch at 33 to 278 (ECGPTSITVN…PTCSEPQGFG (246 aa)) folds into the ZP domain. Residue N284 is glycosylated (N-linked (GlcNAc...) asparagine). The helical transmembrane segment at 355-375 (VVTVFLGLTVFVAIFITYMIV) threads the bilayer. At 376-389 (SRMMVPSDKMQSAC) the chain is on the cytoplasmic side.

It localises to the cell membrane. Functionally, plays a role in alae formation in L1 larvae. This chain is Cuticlin-3, found in Caenorhabditis elegans.